A 462-amino-acid polypeptide reads, in one-letter code: uncharacterized protein (462 aa).

In terms of domain architecture, TRAM spans 12-70; that stretch reads MLKKNDIIQVAISDLSHEGAGVAKHDGFVFFVDNALPEEVIDMRVLKVNKNSGFGKVEA. Positions 294, 323, 344, and 392 each coordinate S-adenosyl-L-methionine. Cys419 (nucleophile) is an active-site residue.

It belongs to the class I-like SAM-binding methyltransferase superfamily. RNA M5U methyltransferase family.

This is an uncharacterized protein from Streptococcus pyogenes serotype M3 (strain ATCC BAA-595 / MGAS315).